Reading from the N-terminus, the 505-residue chain is Catalase (505 aa).

Active-site residues include H58 and N131. Y341 is a binding site for heme.

Belongs to the catalase family. Heme is required as a cofactor.

It catalyses the reaction 2 H2O2 = O2 + 2 H2O. Functionally, decomposes hydrogen peroxide into water and oxygen; serves to protect cells from the toxic effects of hydrogen peroxide. This Methanosarcina barkeri (strain Fusaro / DSM 804) protein is Catalase (kat).